Consider the following 547-residue polypeptide: Glucose-6-phosphate isomerase (547 aa).

The Proton donor role is filled by glutamate 356. Residues histidine 387 and lysine 508 contribute to the active site.

Belongs to the GPI family.

The protein localises to the cytoplasm. The enzyme catalyses alpha-D-glucose 6-phosphate = beta-D-fructose 6-phosphate. It participates in carbohydrate biosynthesis; gluconeogenesis. The protein operates within carbohydrate degradation; glycolysis; D-glyceraldehyde 3-phosphate and glycerone phosphate from D-glucose: step 2/4. Catalyzes the reversible isomerization of glucose-6-phosphate to fructose-6-phosphate. The protein is Glucose-6-phosphate isomerase of Cupriavidus taiwanensis (strain DSM 17343 / BCRC 17206 / CCUG 44338 / CIP 107171 / LMG 19424 / R1) (Ralstonia taiwanensis (strain LMG 19424)).